A 269-amino-acid chain; its full sequence is Small ribosomal subunit protein uS2 (269 aa).

The segment at 228 to 269 (QLDSDDDYEEFDESLAEGDYDDYDEEEDEDSETVSSQEGEEE) is disordered. Over residues 230–269 (DSDDDYEEFDESLAEGDYDDYDEEEDEDSETVSSQEGEEE) the composition is skewed to acidic residues.

The protein belongs to the universal ribosomal protein uS2 family.

This chain is Small ribosomal subunit protein uS2, found in Crocosphaera subtropica (strain ATCC 51142 / BH68) (Cyanothece sp. (strain ATCC 51142)).